Here is a 545-residue protein sequence, read N- to C-terminus: Aclacinomycin-N/aclacinomycin-A oxidase (545 aa).

The tat-type signal signal peptide spans 1–43 (MFVLNEFTRRGFLGTAAAVGGTTVVTTALGGAPAAQAAVPEAA). The region spanning 76-256 (FRGRPDVVYV…TRYWFRTPGA (181 aa)) is the FAD-binding PCMH-type domain. The 6-(S-cysteinyl)-8alpha-(pros-histidyl)-FAD (His-Cys) cross-link spans 113-173 (HCFEGFVDDP…WGVTIPAGVC (61 aa)). Tyr-421 acts as the Proton acceptor in catalysis. Position 451 (Thr-451) interacts with aclacinomycin Y. Asn-492 lines the FAD pocket. Catalysis depends on Tyr-493, which acts as the Proton acceptor. Tyr-493 contributes to the aclacinomycin Y binding site.

Belongs to the oxygen-dependent FAD-linked oxidoreductase family. In terms of assembly, homotetramer; dimer of dimers. The cofactor is FAD. In terms of processing, predicted to be exported by the Tat system. The position of the signal peptide cleavage has been experimentally proven. Post-translationally, the FAD cofactor is bound via a bicovalent 6-S-cysteinyl, 8alpha-N1-histidyl FAD linkage.

It carries out the reaction aclacinomycin N + O2 = aclacinomycin A + H2O2. It catalyses the reaction aclacinomycin A + O2 = aclacinomycin Y + H2O2. Its activity is regulated as follows. Inhibited by ascorbic acid and iron ion. Its function is as follows. Involved in the modification of the terminal sugar residues in the last two steps in the biosynthesis of polyketide antibiotics of the aclacinomycin group. In the first reaction, it catalyzes the oxidation of the hydroxyl group at carbon C4 of the L-rhodinose terminal sugar moiety of aclacinomycin N (AclN) to a keto group, modifying the sugar to cinerulose A and generating aclacinomycin A (AclA). In the second reaction, it catalyzes the elimination of two hydrogen atoms from cinerulose A, leading to a double bond between carbon atoms C2 and C3 and the generation of the L-aculose terminal sugar moiety of aclacinomycin Y (AclY). It can also use aclacinomycin analogs, epsilon-pyrromycinone glycosides, rhodirubins (A, B, C and E) and all triglycosides containing L-cinerulose, L-rhodinose or 2-deoxy-L-fucose as terminal sugar. The protein is Aclacinomycin-N/aclacinomycin-A oxidase of Streptomyces galilaeus.